Reading from the N-terminus, the 335-residue chain is MKNIKKPFDLKGKSLLKEYDLTGEEFEGLIDFAMTLKKYKQQGTPHRYLEGKNIALLFEKTSTRTRAAFTVASIDLGAHPEFLGKNDIQLGKKESVEDTAKVLGRMFDGIEFRGFSQKTVEQLAEFSGVPVWNGLTDDWHPTQMLADYMTIKENFGYLKGINLTYVGNGRNNVAHSLMVAGAMLGVNVRICTPSSLTPRDVYFNIAKDQASNYGGSVKITDNIHTAVKDADVIYTDVWVSMGEESEFETRIHLLKDYQVNRKMLNLTGKVDTIFLHCLPAFHDTQTEYGQDIFKKYGLTEMEVTDEIFRSEHSRVFDQAENRMHTIKAVMAATLG.

Residues 62 to 65 (STRT), Gln-89, Arg-113, and 140 to 143 (HPTQ) contribute to the carbamoyl phosphate site. L-ornithine contacts are provided by residues Asn-172, Asp-236, and 240–241 (SM). Carbamoyl phosphate contacts are provided by residues 277–278 (CL) and Arg-322.

This sequence belongs to the aspartate/ornithine carbamoyltransferase superfamily. OTCase family.

Its subcellular location is the cytoplasm. It carries out the reaction carbamoyl phosphate + L-ornithine = L-citrulline + phosphate + H(+). The protein operates within amino-acid degradation; L-arginine degradation via ADI pathway; carbamoyl phosphate from L-arginine: step 2/2. Reversibly catalyzes the transfer of the carbamoyl group from carbamoyl phosphate (CP) to the N(epsilon) atom of ornithine (ORN) to produce L-citrulline. This chain is Ornithine carbamoyltransferase 2, catabolic (arcB2), found in Staphylococcus epidermidis (strain ATCC 12228 / FDA PCI 1200).